We begin with the raw amino-acid sequence, 247 residues long: OCIA domain-containing protein 1 (247 aa).

The region spanning 1-112 is the OCIA domain; sequence MNGRADFREP…KKLENSPLGE (112 aa). Phosphoserine is present on residues Ser-108 and Ser-116. The tract at residues 116–247 is disordered; it reads SGELRRSLPP…VNKYGDTWDE (132 aa). 2 stretches are compositionally biased toward polar residues: residues 136-146 and 168-177; these read SNVSGQSSFGT and ASMNESTPTG. 2 stretches are compositionally biased toward basic and acidic residues: residues 192-210 and 218-240; these read DSPK…KNRE and HKTD…KVNK. Phosphoserine occurs at positions 193 and 198.

The protein belongs to the OCIAD1 family. In terms of assembly, interacts with OCIAD2. Interacts with STAT3.

It is found in the endosome. Its function is as follows. Maintains stem cell potency. Increases STAT3 phosphorylation and controls ERK phosphorylation. May act as a scaffold, increasing STAT3 recruitment onto endosomes. The chain is OCIA domain-containing protein 1 from Rattus norvegicus (Rat).